The chain runs to 1235 residues: ATP-dependent helicase/nuclease subunit A (1235 aa).

The UvrD-like helicase ATP-binding domain maps to 10–482; sequence SIWTDDQWSA…IDLNQNFRSR (473 aa). 31 to 38 is a binding site for ATP; the sequence is AAAGSGKT. Residues 509–799 enclose the UvrD-like helicase C-terminal domain; it reads QAALKLGASY…RLMTIHSSKG (291 aa).

This sequence belongs to the helicase family. AddA subfamily. In terms of assembly, heterodimer of AddA and AddB/RexB. Mg(2+) serves as cofactor.

It carries out the reaction Couples ATP hydrolysis with the unwinding of duplex DNA by translocating in the 3'-5' direction.. The catalysed reaction is ATP + H2O = ADP + phosphate + H(+). The heterodimer acts as both an ATP-dependent DNA helicase and an ATP-dependent, dual-direction single-stranded exonuclease. Recognizes the chi site generating a DNA molecule suitable for the initiation of homologous recombination. The AddA nuclease domain is required for chi fragment generation; this subunit has the helicase and 3' -&gt; 5' nuclease activities. The polypeptide is ATP-dependent helicase/nuclease subunit A (Bacillus velezensis (strain DSM 23117 / BGSC 10A6 / LMG 26770 / FZB42) (Bacillus amyloliquefaciens subsp. plantarum)).